The sequence spans 255 residues: Small ribosomal subunit protein uS2 (255 aa).

This sequence belongs to the universal ribosomal protein uS2 family.

This chain is Small ribosomal subunit protein uS2, found in Streptococcus uberis (strain ATCC BAA-854 / 0140J).